The chain runs to 301 residues: D-alanine--D-alanine ligase A (301 aa).

The 195-residue stretch at 99-293 (KRILAFGNVR…FEELLDTIIE (195 aa)) folds into the ATP-grasp domain. 126–181 (IENLGYPVFVKPNNGGSSVATTLVESKEAVKDAVLEALKYDTEVMIEEYIKGDEIT) serves as a coordination point for ATP. Mg(2+) is bound by residues D248, E260, and N262.

The protein belongs to the D-alanine--D-alanine ligase family. Mg(2+) serves as cofactor. Mn(2+) is required as a cofactor.

The protein localises to the cytoplasm. The catalysed reaction is 2 D-alanine + ATP = D-alanyl-D-alanine + ADP + phosphate + H(+). It functions in the pathway cell wall biogenesis; peptidoglycan biosynthesis. Cell wall formation. In Clostridium perfringens (strain 13 / Type A), this protein is D-alanine--D-alanine ligase A.